The following is a 164-amino-acid chain: Monothiol glutaredoxin-S10 (164 aa).

The 102-residue stretch at 60–161 folds into the Glutaredoxin domain; that stretch reads EDSVKRTLAD…TMLSELDIDV (102 aa). C80 provides a ligand contact to [2Fe-2S] cluster.

Belongs to the glutaredoxin family. CPYC subfamily.

The protein localises to the cytoplasm. Functionally, may only reduce GSH-thiol disulfides, but not protein disulfides. The protein is Monothiol glutaredoxin-S10 (GRXS10) of Oryza sativa subsp. japonica (Rice).